The sequence spans 399 residues: MNIKSIKDLDLKPGNSVFIRCDFNVPLDEYGNITDDRRIREALPTIRYCLDNDCKIVLGSHLGRPKGFDEKYSLKPVAKRLHTLLKQDIIMAQDVVGEDAKAKFTKLQPGEILLLENLRFEPGETKNDEEFAKKLSQFGEFYVNDAFGVSHRAHASVEAITRFYDQDHKAAGFLLLKEIKYLYKILENPTRPFMAIVGGSKVSGKLGALINLLPKVDKLIIGGAMAFTFLKALGYEVGKSLVEDDLIEEAKNILNQAKNNGVKLYLPVDFVVAPELDPNAPVKYVTFQEIPKTWMGLDIGPASTRLFKEALDEVQTIIWNGPMGVFEIDKFARGSIKLANFVAESFATKIIGGGDTASLISKAGVVDEMTFISTGGGASLELLEGKELPGIKALEVGAS.

Substrate-binding positions include 22–24 (DFN), arginine 38, 61–64 (HLGR), arginine 119, and arginine 152. ATP-binding positions include lysine 205, glycine 296, glutamate 327, and 353 to 356 (GGDT).

The protein belongs to the phosphoglycerate kinase family. In terms of assembly, monomer.

It localises to the cytoplasm. The enzyme catalyses (2R)-3-phosphoglycerate + ATP = (2R)-3-phospho-glyceroyl phosphate + ADP. The protein operates within carbohydrate degradation; glycolysis; pyruvate from D-glyceraldehyde 3-phosphate: step 2/5. The sequence is that of Phosphoglycerate kinase from Nitratiruptor sp. (strain SB155-2).